The primary structure comprises 454 residues: tRNA modification GTPase MnmE (454 aa).

Residues Arg-23, Glu-80, and Lys-120 each coordinate (6S)-5-formyl-5,6,7,8-tetrahydrofolate. A TrmE-type G domain is found at 216-377; it reads GMKVVIAGRP…LRDHLKQSMG (162 aa). Asn-226 is a binding site for K(+). Residues 226–231, 245–251, 270–273, 335–338, and 358–360 each bind GTP; these read NAGKSS, TDIAGTT, DTAG, NKAD, and SAR. Ser-230 is a binding site for Mg(2+). K(+) contacts are provided by Thr-245, Ile-247, and Thr-250. Thr-251 provides a ligand contact to Mg(2+). Residue Lys-454 coordinates (6S)-5-formyl-5,6,7,8-tetrahydrofolate.

This sequence belongs to the TRAFAC class TrmE-Era-EngA-EngB-Septin-like GTPase superfamily. TrmE GTPase family. As to quaternary structure, homodimer. Heterotetramer of two MnmE and two MnmG subunits. K(+) serves as cofactor.

It is found in the cytoplasm. In terms of biological role, exhibits a very high intrinsic GTPase hydrolysis rate. Involved in the addition of a carboxymethylaminomethyl (cmnm) group at the wobble position (U34) of certain tRNAs, forming tRNA-cmnm(5)s(2)U34. The chain is tRNA modification GTPase MnmE from Pectobacterium carotovorum subsp. carotovorum (strain PC1).